Consider the following 379-residue polypeptide: Putative clathrin assembly protein At1g68110 (379 aa).

Residues 26–158 (NSSYRNADLE…SFLSDQIHRL (133 aa)) form the ENTH domain.

Its subcellular location is the membrane. The protein localises to the clathrin-coated pit. The protein resides in the golgi apparatus. It localises to the cytoplasmic vesicle. It is found in the clathrin-coated vesicle. The chain is Putative clathrin assembly protein At1g68110 from Arabidopsis thaliana (Mouse-ear cress).